The following is a 1849-amino-acid chain: Brefeldin A-inhibited guanine nucleotide-exchange protein 1 (1849 aa).

The DCB; DCB:DCB and DCB:HUS domain interaction stretch occupies residues 2–224 (YEGKKTKNMF…QEAKQMEKER (223 aa)). The segment covering 46 to 58 (AETEKQSPPHGEA) has biased composition (basic and acidic residues). 3 disordered regions span residues 46-65 (AETEKQSPPHGEAKAGSSTL), 216-301 (EAKQ…ADQA), and 350-413 (INVS…SPGA). A phosphoserine mark is found at Ser-52, Ser-286, Ser-289, and Ser-290. Polar residues-rich tracts occupy residues 350–360 (INVSADGNNGT) and 394–409 (SVSSNDTQESGNSSGP). Phosphoserine occurs at positions 397 and 410. The HUS; DCB:HUS domain interaction stretch occupies residues 557 to 577 (ADAQSVVDIYVNYDCDLNAAN). Residues 634-687 (PNSQTTLGQEKPSEQETSEMKHPETINRYGSLNSLESTSSSGIGSYSTQMSGTD) are disordered. Residues 644–658 (KPSEQETSEMKHPET) show a composition bias toward basic and acidic residues. Residues 664-684 (SLNSLESTSSSGIGSYSTQMS) are compositionally biased toward low complexity. The SEC7 domain occupies 709 to 840 (FTKKPKRGIQ…IIMLTTDLHS (132 aa)). Residues 711 to 715 (KKPKR) carry the Nuclear localization signal (NLS) motif. Phosphoserine occurs at positions 1079, 1566, and 1569.

Homodimer. Interacts with ARFGEF2/BIG2; both proteins are probably part of the same or very similar macromolecular complexes. Interacts with FKBP2. Interacts with MYO9B. Interacts with PRKAR1A and PRKAR2A. Interacts with PPP1CC. Interacts with NCL, FBL, NUP62 and U3 small nucleolar RNA. Interacts with DPY30. Interacts with PDE3A. Interacts with KANK1. Interacts with TBC1D22A and TBC1D22B. Phosphorylated. In vitro phosphorylated by PKA reducing its GEF activity and dephosphorylated by phosphatase PP1. In terms of tissue distribution, abundantly expressed in kidney, somewhat less abundant in lung, spleen, and brain, and still less abundant in heart.

Its subcellular location is the cytoplasm. It is found in the perinuclear region. The protein resides in the golgi apparatus. The protein localises to the trans-Golgi network. It localises to the nucleus. Its subcellular location is the nucleolus. It is found in the nucleus matrix. The protein resides in the membrane. Inhibited by brefeldin A. Functionally, promotes guanine-nucleotide exchange on ARF1 and ARF3. Promotes the activation of ARF1/ARF3 through replacement of GDP with GTP. Involved in vesicular trafficking. Required for the maintenance of Golgi structure; the function may be independent of its GEF activity. Required for the maturation of integrin beta-1 in the Golgi. Involved in the establishment and persistence of cell polarity during directed cell movement in wound healing. Proposed to act as A kinase-anchoring protein (AKAP) and may mediate crosstalk between Arf and PKA pathways. Inhibits GAP activity of MYO9B probably through competitive RhoA binding. The function in the nucleus remains to be determined. The sequence is that of Brefeldin A-inhibited guanine nucleotide-exchange protein 1 (ARFGEF1) from Bos taurus (Bovine).